Consider the following 84-residue polypeptide: Hirudin-HM2 (84 aa).

The first 20 residues, Met-1 to Ala-20, serve as a signal peptide directing secretion. Residues Val-21–Tyr-23 are interaction with thrombin active site. 3 cysteine pairs are disulfide-bonded: Cys-26-Cys-34, Cys-36-Cys-48, and Cys-42-Cys-57. The interval Ser-53–Asn-84 is disordered. The O-linked (GalNAc...) threonine glycan is linked to Thr-63. Acidic residues predominate over residues Gly-72–Asn-84. The tract at residues Asp-73–Asn-84 is interaction with fibrinogen-binding exosite of thrombin.

Belongs to the protease inhibitor I14 (hirudin) family.

It localises to the secreted. Functionally, hirudin is a potent thrombin-specific protease inhibitor. It forms a stable non-covalent complex with alpha-thrombin, thereby abolishing its ability to cleave fibrinogen. This chain is Hirudin-HM2, found in Hirudinaria manillensis (Asian medical leech).